Here is a 157-residue protein sequence, read N- to C-terminus: Ribosomal RNA large subunit methyltransferase H (157 aa).

S-adenosyl-L-methionine contacts are provided by residues Leu-73, Gly-105, and 124 to 129 (LSRMTF).

The protein belongs to the RNA methyltransferase RlmH family. In terms of assembly, homodimer.

It localises to the cytoplasm. The enzyme catalyses pseudouridine(1915) in 23S rRNA + S-adenosyl-L-methionine = N(3)-methylpseudouridine(1915) in 23S rRNA + S-adenosyl-L-homocysteine + H(+). Functionally, specifically methylates the pseudouridine at position 1915 (m3Psi1915) in 23S rRNA. This is Ribosomal RNA large subunit methyltransferase H from Porphyromonas gingivalis (strain ATCC BAA-308 / W83).